Here is a 575-residue protein sequence, read N- to C-terminus: Potassium-transporting ATPase potassium-binding subunit (575 aa).

Helical transmembrane passes span 4–24, 61–81, 133–153, 180–200, 258–278, 289–309, 344–364, 372–392, 394–414, 431–451, 499–519, and 545–565; these read SAWGLLALFLAALLVLAWPVG, LRYAIALLAFNAVGAVFVYAL, GLAVQNFFSAATGIAVAFALI, LWVLVPLSFVLAVFFVSQGVI, LANLLQMIAVFLIPAALCFAF, WAVLAAMTVMFVAAVMVVIPA, IDASALFAAVTTAASCGAVIA, LGGMVPMVLMQLGEVVFGGVG, GLYGMLIFAMLAVFIAGLMIG, LISIAILVTPVLVLAGTAVAV, LLGLAMWLGRFAVIVPVLAIA, and LLIGTVLLVGLLNYVPALALG.

It belongs to the KdpA family. In terms of assembly, the system is composed of three essential subunits: KdpA, KdpB and KdpC.

It is found in the cell inner membrane. Its function is as follows. Part of the high-affinity ATP-driven potassium transport (or Kdp) system, which catalyzes the hydrolysis of ATP coupled with the electrogenic transport of potassium into the cytoplasm. This subunit binds the periplasmic potassium ions and delivers the ions to the membrane domain of KdpB through an intramembrane tunnel. This chain is Potassium-transporting ATPase potassium-binding subunit, found in Variovorax paradoxus (strain S110).